The primary structure comprises 939 residues: Trafficking kinesin-binding protein 1 (939 aa).

The region spanning 46-353 is the HAP1 N-terminal domain; sequence LEEQLPHYKL…EELKNLRNKT (308 aa). Residues 106–354 adopt a coiled-coil conformation; that stretch reads KTYNDIDAVT…ELKNLRNKTM (249 aa). The tract at residues 359–509 is interaction with HGS; the sequence is RYHSLGLFPM…SLRRENYLSE (151 aa). A glycan (O-linked (GlcNAc) serine) is linked at Ser-444. Residues 472–492 are disordered; it reads LGNEDHNKKPGTPGTPGSHDL. Positions 490–524 form a coiled coil; sequence HDLETALRRLSLRRENYLSERRFFEEEQERKLREL. Residue Ser-534 is modified to Phosphoserine. The tract at residues 655–669 is interaction with OGT; it reads PGKCMSQTNSTFTFT. Ser-677 and Ser-716 each carry an O-linked (GlcNAc) serine glycan. Ser-716 and Ser-905 each carry phosphoserine.

The protein belongs to the milton family. As to quaternary structure, interacts with RHOT1 and RHOT2. Found in a complex with KIF5B, OGT, RHOT1 and RHOT2. Interacts with HGS. Interacts with GABRA1. Interacts with KIF5C. Interacts with OGT; stable interaction is not required for glycosylation of this protein by OGT. Isoform 1 interacts with OGT. Post-translationally, O-glycosylated. Glycosylated by OGT; glycosylation in response to increased extracellular glucose levels is required for and leads to regulation of mitochondrial motility by OGT. In terms of tissue distribution, widely expressed with the greatest expression in brain, liver and kidney. Detected throughout the CNS, including the cortex, hippocamps, thalamus and various subcortical nuclei of the forebrain and midbrain, the granule of Purkinje layers of the cerebellum and the gray matter of the spinal cord. High level detected in lower moter neurons (at protein level).

It is found in the cytoplasm. Its subcellular location is the nucleus. The protein localises to the mitochondrion. It localises to the early endosome. The protein resides in the endosome. It is found in the mitochondrion membrane. Its subcellular location is the cell cortex. Its function is as follows. Involved in the regulation of endosome-to-lysosome trafficking, including endocytic trafficking of EGF-EGFR complexes and GABA-A receptors. Involved in mitochondrial motility. When O-glycosylated, abolishes mitochondrial motility. Crucial for recruiting OGT to the mitochondrial surface of neuronal processes. TRAK1 and RHOT form an essential protein complex that links KIF5 to mitochondria for light chain-independent, anterograde transport of mitochondria. The chain is Trafficking kinesin-binding protein 1 (Trak1) from Mus musculus (Mouse).